The primary structure comprises 194 residues: Histone H1.0 (194 aa).

Met-1 bears the N-acetylmethionine mark. Residues 1 to 11 (MTENSTSAPAA) show a composition bias toward low complexity. The disordered stretch occupies residues 1-28 (MTENSTSAPAAKPKRAKASKKSTDHPKY). Thr-2 is modified (N-acetylthreonine; in Histone H1.0, N-terminally processed). The region spanning 24–97 (DHPKYSDMIV…GASGSFRLAK (74 aa)) is the H15 domain. Arg-42 is modified (citrulline). A disordered region spans residues 86–194 (GVGASGSFRL…SSAKRASKKK (109 aa)). Ser-104 carries the ADP-ribosylserine modification. The segment covering 105–194 (VAFKKTKKEV…SSAKRASKKK (90 aa)) has biased composition (basic residues).

It belongs to the histone H1/H5 family. In terms of processing, ADP-ribosylated on Ser-104 in response to DNA damage.

It is found in the nucleus. Its subcellular location is the chromosome. Functionally, histones H1 are necessary for the condensation of nucleosome chains into higher-order structures. The histones H1.0 are found in cells that are in terminal stages of differentiation or that have low rates of cell division. The polypeptide is Histone H1.0 (H1-0) (Mus musculus (Mouse)).